A 1287-amino-acid polypeptide reads, in one-letter code: FYVE zinc finger domain protein UPA1 (1287 aa).

The disordered stretch occupies residues 1-298 (MTIPDPANII…SSTSLSAPAE (298 aa)). The span at 86 to 99 (DSSSFGSKPSSSAS) shows a compositional bias: low complexity. Polar residues predominate over residues 115 to 136 (WATSSTTSHPSKASQSTLSPNA). The PAM2 signature appears at 128 to 144 (SQSTLSPNASVFKPSRS). Basic and acidic residues-rich tracts occupy residues 177–187 (RPDHAPLDHEQ) and 201–211 (KVEEQRGDHSI). The segment covering 212 to 235 (PHQNGLVSAQAQTASDAVSTSKYT) has biased composition (polar residues). The PAM2L 1 signature appears at 239–253 (ADQEEDQDDFVYPGA). Positions 255 to 294 (SPSSGQAAVQDEQQAVTDSQTTKSLTKQESDPEASSTSLS) are enriched in polar residues. 4 ANK repeats span residues 366–395 (NGLV…AIVE), 400–429 (EGET…DANA), 433–463 (DGWT…QIDV), and 468–497 (GAWT…ADPF). Disordered regions lie at residues 582–630 (NGGK…VGLP), 643–697 (RVGP…ASAQ), 934–960 (REAA…YPNS), and 977–1005 (TSGT…APSE). The segment covering 674-695 (STPTPESVLQARRGTSSVNGAS) has biased composition (polar residues). Residues 938-955 (GLDEDEDEDAADDDDDEF) are compositionally biased toward acidic residues. Residues 941-960 (EDEDEDAADDDDDEFIYPNS) carry the PAM2L 2 motif. The segment covering 981–995 (LSRPSLSQRQSSAAS) has biased composition (low complexity). The segment at 1055–1129 (DEEAKDCIGC…VCNGCHAELQ (75 aa)) adopts an FYVE-type zinc-finger fold. Residues C1061, C1064, C1077, C1080, C1085, C1088, C1121, and C1124 each contribute to the Zn(2+) site. Residues 1243–1283 (CSICMEDFVANSTIARLPCLCYFHRGCIDSWFKRGRECPVH) form an RING-type; atypical zinc finger.

The protein belongs to the UPA1 PAM2 domain-binding protein family. In terms of assembly, part of large ribonucleoprotein complexes (mRNPs) containing RNA-binding proteins RRM4 and PAB1, endosome-binding protein UPA1, core scaffold protein UPA2 and associated factor GRP1. Interacts (via PAM2 motif) with PAB1 (via PABC domain). Interacts (via PAM2L motifs) with RRM4.

The protein resides in the cytoplasm. It is found in the cytoskeleton. It localises to the endosome. Its function is as follows. FYVE zinc finger domain protein that functions in endosomal targeting and transport of mRNAs, as well as associated ribosomes. The endosomal mRNA transport regulates polarity of the infectious hyphae by transporting a broad spectrum of cargo mRNAs from the nucleus to cell poles. Involved in chitinase CTS1 secretion. Dispensable for general endosomal functions but crucial for endosomal recruitment of RRM4. This chain is FYVE zinc finger domain protein UPA1, found in Mycosarcoma maydis (Corn smut fungus).